Reading from the N-terminus, the 894-residue chain is Exocyst complex component 2 (894 aa).

The 85-residue stretch at 5-89 (PVVTGLSPKE…GTSTVQFRAY (85 aa)) folds into the IPT/TIG domain. The span at 398-413 (HTSKDSGAQEKAKNRD) shows a compositional bias: basic and acidic residues. Residues 398–417 (HTSKDSGAQEKAKNRDSSQA) are disordered.

This sequence belongs to the SEC5 family. In terms of assembly, the exocyst complex is composed of Sec3/Exoc1, Sec5/Exoc2, Sec6/Exoc3, Sec8/Exoc4, Sec10/Exoc5, Sec15/Exoc6, Exo70/Exoc7 and Exo84/Exoc8.

Functionally, component of the exocyst complex involved in the docking of exocytic vesicles with fusion sites on the plasma membrane. The sequence is that of Exocyst complex component 2 from Drosophila melanogaster (Fruit fly).